A 459-amino-acid chain; its full sequence is Vacuolar cation/proton exchanger 3 (459 aa).

Topologically, residues 1–67 are cytoplasmic; that stretch reads MGSIVEPWAA…TLKNILSNLQ (67 aa). Residues 68–88 form a helical membrane-spanning segment; the sequence is EVILGTKLTLLFLAIPLAILA. At 89–95 the chain is on the extracellular side; sequence NSYNYGR. The helical transmembrane segment at 96–116 threads the bilayer; sequence PLIFGLSLIGLTPLAERVSFL. Residues 117-129 are Cytoplasmic-facing; that stretch reads TEQLAFYTGPTVG. The chain crosses the membrane as a helical span at residues 130–150; the sequence is GLLNATCGNATELIIAILALA. The segment at 137 to 172 is cation selection; the sequence is GNATELIIAILALANNKVAVVKYSLLGSILSNLLLV. Residues 151-161 are Extracellular-facing; it reads NNKVAVVKYSL. The chain crosses the membrane as a helical span at residues 162 to 182; it reads LGSILSNLLLVLGTSLFFGGI. At 183 to 195 the chain is on the cytoplasmic side; sequence ANIRREQRFDRKQ. A helical transmembrane segment spans residues 196-216; that stretch reads ADVNFFLLLMGLLCHLLPLLL. Residues 217 to 238 are Extracellular-facing; sequence KYAATGEVSTSMINKMSLTLSR. The helical transmembrane segment at 239–259 threads the bilayer; the sequence is TSSIVMLIAYIAYLIFQLWTH. The Cytoplasmic portion of the chain corresponds to 260–283; the sequence is RQLFEAQQDDDDAYDDEVSVEETP. The helical transmembrane segment at 284–304 threads the bilayer; it reads VIGFWSGFAWLVGMTIVIALL. At 305–327 the chain is on the extracellular side; sequence SEYVVDTIEDASDSWGLSVSFIS. The helical transmembrane segment at 328 to 348 threads the bilayer; the sequence is IILLPIVGNAAEHAGAIIFAF. Positions 335–370 are cation selection; it reads GNAAEHAGAIIFAFKNKLDISLGVALGSATQISLFV. Residues 349–362 are Cytoplasmic-facing; that stretch reads KNKLDISLGVALGS. Residues 363–383 traverse the membrane as a helical segment; the sequence is ATQISLFVVPLSVIVAWILGI. Topologically, residues 384-386 are extracellular; it reads KMD. The chain crosses the membrane as a helical span at residues 387 to 407; that stretch reads LNFNILETSSLALAIIITAFT. At 408 to 417 the chain is on the cytoplasmic side; the sequence is LQDGTSHYMK. A helical transmembrane segment spans residues 418 to 438; that stretch reads GLVLLLCYVIIAACFFVDQIP. The Extracellular portion of the chain corresponds to 439-459; that stretch reads QPNDLDVGLQPMNNLGEVFSA.

This sequence belongs to the Ca(2+):cation antiporter (CaCA) (TC 2.A.19) family. Cation/proton exchanger (CAX) subfamily. Expressed in roots, stems and flowers.

Its subcellular location is the vacuole membrane. Inhibited by excess of Ca(2+). Its function is as follows. Vacuolar cation/proton exchanger (CAX). Translocates Ca(2+) and other metal ions into vacuoles using the proton gradient formed by H(+)-ATPase and H(+)-pyrophosphatase. Involved in ion homeostasis in association with CAX1. The sequence is that of Vacuolar cation/proton exchanger 3 (CAX3) from Arabidopsis thaliana (Mouse-ear cress).